We begin with the raw amino-acid sequence, 500 residues long: Formate-nitrite transporter 3 (500 aa).

The Cytoplasmic segment spans residues 1–31; sequence MVLAASPEAYRKVIEYGIKKTKLRIDRLFLQ. A helical transmembrane segment spans residues 32–52; it reads AIMAGIYVGMAGHACTALAGA. Over 53–69 the chain is Extracellular; it reads YSTDPANPLAVSKATQK. The helical transmembrane segment at 70–90 threads the bilayer; sequence FLYASLFPVAFIAIIFTGAEL. The Cytoplasmic segment spans residues 91 to 113; sequence FTGNTMTMLVCLLERRVTALQLC. The helical transmembrane segment at 114–134 threads the bilayer; it reads INWICSLVGNWAGALFAAYFL. Topologically, residues 135 to 164 are extracellular; it reads SYLPGVLQDPDHLHYLEDVAAHKTELSFLQ. Residues 165-185 form a helical membrane-spanning segment; it reads CFCLAVGCNTFVCLAVWFVIA. The Cytoplasmic segment spans residues 186-192; it reads SDDAAGK. A helical membrane pass occupies residues 193–213; that stretch reads IMSMWFPIVSFCVAGYEHIIA. The Extracellular segment spans residues 214-237; it reads NFYTLQCALMHGVGPGVGTVILKN. A helical transmembrane segment spans residues 238–258; sequence FIPTLLGNIVGGCGLVGAVYW. Over 259–500 the chain is Cytoplasmic; the sequence is YNFYPTVCVV…ALEEHPASTI (242 aa). The tract at residues 411 to 500 is disordered; sequence PLRENSGVPS…ALEEHPASTI (90 aa). Basic and acidic residues-rich tracts occupy residues 428 to 444 and 466 to 485; these read GRVR…RGGE and FHPH…ETRV.

The protein belongs to the FNT transporter (TC 1.A.16) family. Homopentamer.

It localises to the cell membrane. It catalyses the reaction (S)-lactate(in) + H(+)(in) = (S)-lactate(out) + H(+)(out). It carries out the reaction formate(in) + H(+)(in) = formate(out) + H(+)(out). The catalysed reaction is pyruvate(out) + H(+)(out) = pyruvate(in) + H(+)(in). The enzyme catalyses acetate(out) + H(+)(out) = acetate(in) + H(+)(in). With respect to regulation, inhibited by p-chloromercuribenzene sulfonate (pCMBS). Methyl methanethiosulfonate (MMTS) inhibits L-lactate but not formate transport. Inhibited by the Malaria Box compound MMV007839. Inhibited by BH-296, BH-317, BH-326 and BH-388 compounds. Functionally, monocarboxylate-proton symporter; active in acidic-to-neutral pH range. Transports L-lactate and formate. This chain is Formate-nitrite transporter 3, found in Toxoplasma gondii (strain ATCC 50611 / Me49).